The following is a 765-amino-acid chain: 5-methyltetrahydropteroyltriglutamate--homocysteine methyltransferase (765 aa).

5-methyltetrahydropteroyltri-L-glutamate-binding positions include 16-19 (RELK) and K121. Residues 441–443 (IGS) and E494 each bind L-homocysteine. L-methionine contacts are provided by residues 441-443 (IGS) and E494. 5-methyltetrahydropteroyltri-L-glutamate contacts are provided by residues 525-526 (RC) and W571. Position 609 (D609) interacts with L-homocysteine. D609 lines the L-methionine pocket. A 5-methyltetrahydropteroyltri-L-glutamate-binding site is contributed by E615. Positions 651, 653, and 675 each coordinate Zn(2+). H704 serves as the catalytic Proton donor. Position 736 (C736) interacts with Zn(2+).

It belongs to the vitamin-B12 independent methionine synthase family. Requires Zn(2+) as cofactor.

The catalysed reaction is 5-methyltetrahydropteroyltri-L-glutamate + L-homocysteine = tetrahydropteroyltri-L-glutamate + L-methionine. It functions in the pathway amino-acid biosynthesis; L-methionine biosynthesis via de novo pathway; L-methionine from L-homocysteine (MetE route): step 1/1. Catalyzes the transfer of a methyl group from 5-methyltetrahydrofolate to homocysteine resulting in methionine formation. The protein is 5-methyltetrahydropteroyltriglutamate--homocysteine methyltransferase of Saccharophagus degradans (strain 2-40 / ATCC 43961 / DSM 17024).